An 89-amino-acid chain; its full sequence is Small ribosomal subunit protein uS15 (89 aa).

Belongs to the universal ribosomal protein uS15 family. In terms of assembly, part of the 30S ribosomal subunit. Forms a bridge to the 50S subunit in the 70S ribosome, contacting the 23S rRNA.

In terms of biological role, one of the primary rRNA binding proteins, it binds directly to 16S rRNA where it helps nucleate assembly of the platform of the 30S subunit by binding and bridging several RNA helices of the 16S rRNA. Functionally, forms an intersubunit bridge (bridge B4) with the 23S rRNA of the 50S subunit in the ribosome. This is Small ribosomal subunit protein uS15 from Anoxybacillus flavithermus (strain DSM 21510 / WK1).